Here is a 530-residue protein sequence, read N- to C-terminus: Type 2 DNA topoisomerase 6 subunit B (530 aa).

Residues Asn-42, Asp-76, Ser-97–Lys-98, Gly-106–Lys-113, and Lys-427 contribute to the ATP site.

This sequence belongs to the TOP6B family. As to quaternary structure, homodimer. Heterotetramer of two Top6A and two Top6B chains.

It carries out the reaction ATP-dependent breakage, passage and rejoining of double-stranded DNA.. Relaxes both positive and negative superturns and exhibits a strong decatenase activity. The chain is Type 2 DNA topoisomerase 6 subunit B from Saccharolobus islandicus (strain Y.N.15.51 / Yellowstone #2) (Sulfolobus islandicus).